Consider the following 310-residue polypeptide: HPr kinase/phosphorylase (310 aa).

Residues histidine 138 and lysine 159 contribute to the active site. Glycine 153 to serine 160 contributes to the ATP binding site. Position 160 (serine 160) interacts with Mg(2+). The Proton acceptor; for phosphorylation activity. Proton donor; for dephosphorylation activity role is filled by aspartate 177. The interval leucine 201–aspartate 210 is important for the catalytic mechanism of both phosphorylation and dephosphorylation. Position 202 (glutamate 202) interacts with Mg(2+). Arginine 243 is a catalytic residue. An important for the catalytic mechanism of dephosphorylation region spans residues proline 264–arginine 269.

The protein belongs to the HPrK/P family. As to quaternary structure, homohexamer. Requires Mg(2+) as cofactor.

It catalyses the reaction [HPr protein]-L-serine + ATP = [HPr protein]-O-phospho-L-serine + ADP + H(+). It carries out the reaction [HPr protein]-O-phospho-L-serine + phosphate + H(+) = [HPr protein]-L-serine + diphosphate. Functionally, catalyzes the ATP- as well as the pyrophosphate-dependent phosphorylation of a specific serine residue in HPr, a phosphocarrier protein of the phosphoenolpyruvate-dependent sugar phosphotransferase system (PTS). HprK/P also catalyzes the pyrophosphate-producing, inorganic phosphate-dependent dephosphorylation (phosphorolysis) of seryl-phosphorylated HPr (P-Ser-HPr). The two antagonistic activities of HprK/P are regulated by several intracellular metabolites, which change their concentration in response to the absence or presence of rapidly metabolisable carbon sources (glucose, fructose, etc.) in the growth medium. Therefore, by controlling the phosphorylation state of HPr, HPrK/P is a sensor enzyme that plays a major role in the regulation of carbon metabolism and sugar transport: it mediates carbon catabolite repression (CCR), and regulates PTS-catalyzed carbohydrate uptake and inducer exclusion. The polypeptide is HPr kinase/phosphorylase (Streptococcus equi subsp. equi (strain 4047)).